A 483-amino-acid polypeptide reads, in one-letter code: Glutamyl-tRNA(Gln) amidotransferase subunit A (483 aa).

Catalysis depends on charge relay system residues Lys-76 and Ser-151. Catalysis depends on Ser-175, which acts as the Acyl-ester intermediate.

The protein belongs to the amidase family. GatA subfamily. As to quaternary structure, heterotrimer of A, B and C subunits.

It catalyses the reaction L-glutamyl-tRNA(Gln) + L-glutamine + ATP + H2O = L-glutaminyl-tRNA(Gln) + L-glutamate + ADP + phosphate + H(+). In terms of biological role, allows the formation of correctly charged Gln-tRNA(Gln) through the transamidation of misacylated Glu-tRNA(Gln) in organisms which lack glutaminyl-tRNA synthetase. The reaction takes place in the presence of glutamine and ATP through an activated gamma-phospho-Glu-tRNA(Gln). This Azotobacter vinelandii (strain DJ / ATCC BAA-1303) protein is Glutamyl-tRNA(Gln) amidotransferase subunit A.